Here is an 860-residue protein sequence, read N- to C-terminus: Envelope glycoprotein gp160 (860 aa).

Positions 1–22 (MEPGRNQLFVVILLTSACLVYC) are cleaved as a signal peptide. At 23-678 (SQYVTVFYGI…LTSWVKYIQY (656 aa)) the chain is on the extracellular side. An N-linked (GlcNAc...) asparagine; by host glycan is attached at Asn37. The cysteines at positions 44 and 57 are disulfide-linked. Asn70, Asn79, Asn112, Asn119, Asn144, Asn152, Asn194, Asn206, Asn238, Asn241, Asn272, Asn278, Asn289, Asn300, Asn310, Asn365, Asn371, Asn398, Asn410, Asn460, and Asn465 each carry an N-linked (GlcNAc...) asparagine; by host glycan. Intrachain disulfides connect Cys101/Cys214, Cys108/Cys205, Cys113/Cys166, Cys227/Cys257, and Cys237/Cys249. The segment at 113-165 (CSRVQGNTTTPNPRTSSSTTSRPPTSAASIINETSNCIENNTCAGLGYEEMMQ) is V1. The segment at 118-139 (GNTTTPNPRTSSSTTSRPPTSA) is disordered. Residues 119-139 (NTTTPNPRTSSSTTSRPPTSA) are compositionally biased toward low complexity. The V2 stretch occupies residues 166–205 (CEFNMKGLEQDKKRRYKDTWYLEDVVCDNTTAGTCYMRHC). Positions 305-337 (CKRPGNKTVLPITLMSGLVFHSQPINTRPRQAW) are V3. Cys305 and Cys338 form a disulfide bridge. Disulfide bonds link Cys390/Cys444 and Cys397/Cys417. The V4 stretch occupies residues 397–417 (CNMTWFLNWVEDKNQTRRNYC). Positions 460–468 (NRTHTNITF) are V5. The interval 511 to 531 (GVFVLGFLGFLATAGSAMGAR) is fusion peptide. Positions 574-590 (LQARVTAIEKYLKHQAQ) are immunosuppression. N-linked (GlcNAc...) asparagine; by host glycosylation is found at Asn610, Asn619, and Asn635. A coiled-coil region spans residues 623-644 (QEWEKQVRYLEANISQSLEEAQ). Residues 656 to 677 (KLNSWDILGNWFDLTSWVKYIQ) form an MPER; binding to GalCer region. A helical membrane pass occupies residues 679-699 (GVHIVVGIIALRIAIYVVQLL). Topologically, residues 700–860 (SRFRKGYRPV…IRQGAELALL (161 aa)) are cytoplasmic. Residues 706–709 (YRPV) carry the YXXV motif; contains endocytosis signal motif. Cys772 carries the S-palmitoyl cysteine; by host lipid modification. The Di-leucine internalization motif motif lies at 859–860 (LL).

As to quaternary structure, the mature envelope protein (Env) consists of a homotrimer of non-covalently associated gp120-gp41 heterodimers. The resulting complex protrudes from the virus surface as a spike. There seems to be as few as 10 spikes on the average virion. Interacts with human CD4, CCR5 and CXCR4, to form a P4HB/PDI-CD4-CXCR4-gp120 complex. Gp120 also interacts with the C-type lectins CD209/DC-SIGN and CLEC4M/DC-SIGNR (collectively referred to as DC-SIGN(R)). Gp120 and gp41 interact with GalCer. In terms of assembly, the mature envelope protein (Env) consists of a homotrimer of non-covalently associated gp120-gp41 heterodimers. The resulting complex protrudes from the virus surface as a spike. There seems to be as few as 10 spikes on the average virion. Post-translationally, specific enzymatic cleavages in vivo yield mature proteins. Envelope glycoproteins are synthesized as an inactive precursor that is heavily N-glycosylated and processed likely by host cell furin in the Golgi to yield the mature SU and TM proteins. The cleavage site between SU and TM requires the minimal sequence [KR]-X-[KR]-R. In terms of processing, palmitoylation of the transmembrane protein and of Env polyprotein (prior to its proteolytic cleavage) is essential for their association with host cell membrane lipid rafts. Palmitoylation is therefore required for envelope trafficking to classical lipid rafts, but not for viral replication.

Its subcellular location is the virion membrane. The protein resides in the host cell membrane. The protein localises to the host endosome membrane. Its function is as follows. The surface protein gp120 (SU) attaches the virus to the host lymphoid cell by binding to the primary receptor CD4. This interaction induces a structural rearrangement creating a high affinity binding site for a chemokine coreceptor like CXCR4 and/or CCR5. This peculiar 2 stage receptor-interaction strategy allows gp120 to maintain the highly conserved coreceptor-binding site in a cryptic conformation, protected from neutralizing antibodies. Since CD4 also displays a binding site for the disulfide-isomerase P4HB/PDI, a P4HB/PDI-CD4-CXCR4-gp120 complex may form. In that complex, P4HB/PDI could reach and reduce gp120 disulfide bonds, causing major conformational changes in gp120. TXN, another PDI family member could also be involved in disulfide rearrangements in Env during fusion. These changes are transmitted to the transmembrane protein gp41 and are thought to activate its fusogenic potential by unmasking its fusion peptide. The surface protein gp120 is a ligand for CD209/DC-SIGN and CLEC4M/DC-SIGNR, which are respectively found on dendritic cells (DCs), and on endothelial cells of liver sinusoids and lymph node sinuses. These interactions allow capture of viral particles at mucosal surfaces by these cells and subsequent transmission to permissive cells. DCs are professional antigen presenting cells, critical for host immunity by inducing specific immune responses against a broad variety of pathogens. They act as sentinels in various tissues where they take up antigen, process it, and present it to T-cells following migration to lymphoid organs. HIV subverts the migration properties of dendritic cells to gain access to CD4+ T-cells in lymph nodes. Virus transmission to permissive T-cells occurs either in trans (without DCs infection, through viral capture and transmission), or in cis (following DCs productive infection, through the usual CD4-gp120 interaction), thereby inducing a robust infection. In trans infection, bound virions remain infectious over days and it is proposed that they are not degraded, but protected in non-lysosomal acidic organelles within the DCs close to the cell membrane thus contributing to the viral infectious potential during DCs' migration from the periphery to the lymphoid tissues. On arrival at lymphoid tissues, intact virions recycle back to DCs' cell surface allowing virus transmission to CD4+ T-cells. Virion capture also seems to lead to MHC-II-restricted viral antigen presentation, and probably to the activation of HIV-specific CD4+ cells. Functionally, the transmembrane protein gp41 (TM) acts as a class I viral fusion protein. Under the current model, the protein has at least 3 conformational states: pre-fusion native state, pre-hairpin intermediate state, and post-fusion hairpin state. During fusion of viral and target intracellular membranes, the coiled coil regions (heptad repeats) assume a trimer-of-hairpins structure, positioning the fusion peptide in close proximity to the C-terminal region of the ectodomain. The formation of this structure appears to drive apposition and subsequent fusion of viral and target cell membranes. Complete fusion occurs in host cell endosomes and is dynamin-dependent, however some lipid transfer might occur at the plasma membrane. The virus undergoes clathrin-dependent internalization long before endosomal fusion, thus minimizing the surface exposure of conserved viral epitopes during fusion and reducing the efficacy of inhibitors targeting these epitopes. Membranes fusion leads to delivery of the nucleocapsid into the cytoplasm. In terms of biological role, the envelope glycoprotein gp160 precursor down-modulates cell surface CD4 antigen by interacting with it in the endoplasmic reticulum and blocking its transport to the cell surface. Its function is as follows. The gp120-gp41 heterodimer seems to contribute to T-cell depletion during HIV-1 infection. The envelope glycoproteins expressed on the surface of infected cells induce apoptosis through an interaction with uninfected cells expressing the receptor (CD4) and the coreceptors CXCR4 or CCR5. This type of bystander killing may be obtained by at least three distinct mechanisms. First, the interaction between the 2 cells can induce cellular fusion followed by nuclear fusion within the syncytium. Syncytia are condemned to die from apoptosis. Second, the 2 interacting cells may not fuse entirely and simply exchange plasma membrane lipids, after a sort of hemifusion process, followed by rapid death. Third, it is possible that virus-infected cells, on the point of undergoing apoptosis, fuse with CD4-expressing cells, in which case apoptosis is rapidly transmitted from one cell to the other and thus occurs in a sort of contagious fashion. The gp120-gp41 heterodimer allows rapid transcytosis of the virus through CD4 negative cells such as simple epithelial monolayers of the intestinal, rectal and endocervical epithelial barriers. Both gp120 and gp41 specifically recognize glycosphingolipids galactosyl-ceramide (GalCer) or 3' sulfo-galactosyl-ceramide (GalS) present in the lipid rafts structures of epithelial cells. Binding to these alternative receptors allows the rapid transcytosis of the virus through the epithelial cells. This transcytotic vesicle-mediated transport of virions from the apical side to the basolateral side of the epithelial cells does not involve infection of the cells themselves. This is Envelope glycoprotein gp160 (env) from Homo sapiens (Human).